Reading from the N-terminus, the 199-residue chain is Chaperone protein TorD (199 aa).

It belongs to the TorD/DmsD family. TorD subfamily.

It localises to the cytoplasm. Functionally, involved in the biogenesis of TorA. Acts on TorA before the insertion of the molybdenum cofactor and, as a result, probably favors a conformation of the apoenzyme that is competent for acquiring the cofactor. The protein is Chaperone protein TorD of Actinobacillus pleuropneumoniae serotype 7 (strain AP76).